Reading from the N-terminus, the 458-residue chain is Bifunctional protein GlmU (458 aa).

The tract at residues 1-224 (MTVIALAAGK…PKVAVGVNNQ (224 aa)) is pyrophosphorylase. UDP-N-acetyl-alpha-D-glucosamine-binding positions include 6–9 (LAAG), lysine 20, glutamine 71, and 76–77 (GT). Aspartate 99 is a binding site for Mg(2+). UDP-N-acetyl-alpha-D-glucosamine is bound by residues glycine 136, glutamate 150, asparagine 165, and asparagine 222. Residue asparagine 222 participates in Mg(2+) binding. A linker region spans residues 225–245 (LELARATRLLFKRKALRLMED). The segment at 246–458 (GVLMIDPRTV…TAETEEKEQV (213 aa)) is N-acetyltransferase. Arginine 328 and lysine 346 together coordinate UDP-N-acetyl-alpha-D-glucosamine. Histidine 358 (proton acceptor) is an active-site residue. The UDP-N-acetyl-alpha-D-glucosamine site is built by tyrosine 361 and asparagine 372. Residues 381–382 (NY), serine 401, serine 419, and arginine 436 each bind acetyl-CoA.

This sequence in the N-terminal section; belongs to the N-acetylglucosamine-1-phosphate uridyltransferase family. In the C-terminal section; belongs to the transferase hexapeptide repeat family. As to quaternary structure, homotrimer. Mg(2+) is required as a cofactor.

It is found in the cytoplasm. It catalyses the reaction alpha-D-glucosamine 1-phosphate + acetyl-CoA = N-acetyl-alpha-D-glucosamine 1-phosphate + CoA + H(+). It carries out the reaction N-acetyl-alpha-D-glucosamine 1-phosphate + UTP + H(+) = UDP-N-acetyl-alpha-D-glucosamine + diphosphate. It participates in nucleotide-sugar biosynthesis; UDP-N-acetyl-alpha-D-glucosamine biosynthesis; N-acetyl-alpha-D-glucosamine 1-phosphate from alpha-D-glucosamine 6-phosphate (route II): step 2/2. The protein operates within nucleotide-sugar biosynthesis; UDP-N-acetyl-alpha-D-glucosamine biosynthesis; UDP-N-acetyl-alpha-D-glucosamine from N-acetyl-alpha-D-glucosamine 1-phosphate: step 1/1. Its pathway is bacterial outer membrane biogenesis; LPS lipid A biosynthesis. In terms of biological role, catalyzes the last two sequential reactions in the de novo biosynthetic pathway for UDP-N-acetylglucosamine (UDP-GlcNAc). The C-terminal domain catalyzes the transfer of acetyl group from acetyl coenzyme A to glucosamine-1-phosphate (GlcN-1-P) to produce N-acetylglucosamine-1-phosphate (GlcNAc-1-P), which is converted into UDP-GlcNAc by the transfer of uridine 5-monophosphate (from uridine 5-triphosphate), a reaction catalyzed by the N-terminal domain. This is Bifunctional protein GlmU from Bdellovibrio bacteriovorus (strain ATCC 15356 / DSM 50701 / NCIMB 9529 / HD100).